Here is a 248-residue protein sequence, read N- to C-terminus: Probable transcriptional regulatory protein PP_1214 (248 aa).

The disordered stretch occupies residues 1 to 21 (MAGHSKWANIKHRKERQDAKR).

It belongs to the TACO1 family.

Its subcellular location is the cytoplasm. The sequence is that of Probable transcriptional regulatory protein PP_1214 from Pseudomonas putida (strain ATCC 47054 / DSM 6125 / CFBP 8728 / NCIMB 11950 / KT2440).